Here is a 440-residue protein sequence, read N- to C-terminus: Cytochrome P450 monooygenase 1 (440 aa).

Cys-381 lines the heme pocket.

The protein belongs to the cytochrome P450 family. Heme is required as a cofactor.

Its pathway is plant hormone biosynthesis; gibberellin biosynthesis. GA14 synthase; part of the gene cluster that mediates the biosynthesis of gibberellins (GAs), diterpenoids that may provide a selective advantage during infection of the preferred host plant, rice. Gibberellins (GAs) are diterpenoids and are synthesized via the mevalonate pathway. Biosynthesis of the major metabolite GA3 (gibberellic acid) from geranylgeranyl diphosphate (GGPP) requires 13 steps. The GGPP produced by the geranylgeranyl diphosphate synthase GGS2 is converted to ent-kaurene via ent-copalyldiphosphate in a two-step cyclization reaction performed by the bifunctional ent-copalyl diphosphate synthase/ent-kaurene synthase enzyme (CPS/KS). Ent-Kaurene is metabolized to GAs by a series of oxidation reactions catalyzed by cytochrome P450 monooxygenases. Cytochrome P450 monooxygenase P450-4 is an ent-kaurene oxidase that catalyzes the three oxidation steps between ent-kaurene and ent-kaurenoic acid. The highly multifunctional cytochrome P450 monooxygenase P450-1 then catalyzes four steps involving oxidation at two carbon atoms, in the main pathway from ent-kaurenoic acid to GA14 via GA12-aldehyde as well as producing kaurenolides and fujenoic acids as by-products. The cytochrome P450 monooxygenase P450-2 then converts GA14 to GA4 by removal of C-20. GA4 is further converted to GA7 by the GA4 desaturase DES via 1,2-desaturation before cytochrome P450 monooxygenase P450-3, a 13-hydroxylase, hydroxylates GA7 to GA3, the final product of the GA-biosynthetic pathway. This is Cytochrome P450 monooygenase 1 from Gibberella fujikuroi (strain CBS 195.34 / IMI 58289 / NRRL A-6831) (Bakanae and foot rot disease fungus).